Consider the following 283-residue polypeptide: MRYAVVTGVSSGIGKAICEKFLAKGLYVFGSVRKKEDAKYFEEKYPNTFHTLVFDTTDYPAVDKAVEEIHKVVGKKGLSVLVNNAGVAKYGPIQHVPIEELRQQYEVNVFASVYLTQKLLWLLGASKEAKWQGKVIQISSTAGVMTRPMLGPYSSSKHAVEAIYDALRRELMIYGVEVVLIEPGPIKTEIWGKAKSGGNPYKDTDYGEIFAQLDKAVDEIEKIGLPVEAVAGKAWEAFVAKKPKARYVVAPKKLMFKAAMYLIPDRMLDKIFYKDLKKLTQES.

Tyr153 functions as the Proton acceptor in the catalytic mechanism.

It belongs to the short-chain dehydrogenases/reductases (SDR) family.

It carries out the reaction 3-oxocapnine + NADPH + H(+) = capnine + NADP(+). The protein operates within lipid metabolism. Its function is as follows. Reductase involved in the biosynthesis of capnine, a sulfonolipid present in the outer membrane of gliding Bacteroidetes and essential for gliding motility. Catalyzes the reduction of 3-dehydrocapnine to capnine. This is NADPH-dependent 3-dehydrocapnine reductase from Ornithobacterium rhinotracheale.